The sequence spans 121 residues: CRISPR system Cms protein Csm2 (121 aa).

This sequence belongs to the CRISPR-associated Csm2 family. As to quaternary structure, part of the Csm effector complex that includes at least Cas10(1), Csm2(3), Csm3(5), Csm4(1), Csm5(1) and mature crRNA. The Csm complex is elongated and slightly twisted with a maximal length of 215 Angstroms and a diameter of 75-80 Angstroms. It has been modeled to have a central protein filamant of Csm3 subunits along which the dsRNA helix of paired crRNA and target RNA binds. The filament is capped at one end by Cas10 and Csm4 and at the other end by Csm5; ssDNA is thought to bind to the N-terminal HD domain of Cas10. Csm with a precursor crRNA does not include Csm5, while Cas6, the enzyme probably involved in pre-crRNA processing, is found associated with a subset of the Csm complex.

Its function is as follows. CRISPR (clustered regularly interspaced short palindromic repeat) is an adaptive immune system that provides protection against mobile genetic elements (viruses, transposable elements and conjugative plasmids). CRISPR clusters contain spacers, sequences complementary to antecedent mobile elements, and target invading nucleic acids. CRISPR clusters are transcribed and processed into CRISPR RNA (crRNA). The type III-A Csm effector complex binds crRNA and acts as a crRNA-guided RNase, DNase and cyclic oligoadenylate synthase; binding of target RNA cognate to the crRNA is required for all activities. In a heterologous host this Csm effector complex restricts ssRNA phage MS2, suggesting it may target RNA viruses in vivo. Csm functions as a non-specific ssDNase. Base-pairing between crRNA and target RNA to form a ternary Csm complex activates a ssDNase activity; target RNA cleavage suppresses the ssDNase, a temporal control that prevents uncontrolled DNA degradation. Viral RNA transcripts probably tether the Csm complex to the viral genome, recruiting Cas10 ssDNA activity which is able to degrade DNA in the transcription bubble, spatially controlling the DNase activity. In terms of biological role, this subunit may be involved in monitoring complementarity of crRNA and target RNA. The protein is CRISPR system Cms protein Csm2 of Streptococcus thermophilus.